The following is a 304-amino-acid chain: D-alanine--D-alanine ligase (304 aa).

One can recognise an ATP-grasp domain in the interval 103–299 (KLIWQALGLP…FADLCIEILK (197 aa)). 129 to 184 (EEKLGLPMFVKPAAEGSSVGVVKVKGKGRLKSVYEELKHFQGEIIAERFIGGGEYS) lines the ATP pocket. Positions 253, 266, and 268 each coordinate Mg(2+).

This sequence belongs to the D-alanine--D-alanine ligase family. The cofactor is Mg(2+). Mn(2+) is required as a cofactor.

The protein localises to the cytoplasm. It carries out the reaction 2 D-alanine + ATP = D-alanyl-D-alanine + ADP + phosphate + H(+). The protein operates within cell wall biogenesis; peptidoglycan biosynthesis. Its function is as follows. Cell wall formation. The chain is D-alanine--D-alanine ligase from Neisseria meningitidis serogroup A / serotype 4A (strain DSM 15465 / Z2491).